An 864-amino-acid polypeptide reads, in one-letter code: DNA mismatch repair protein MutS (864 aa).

An ATP-binding site is contributed by 607 to 614; it reads GPNMGGKS.

Belongs to the DNA mismatch repair MutS family.

In terms of biological role, this protein is involved in the repair of mismatches in DNA. It is possible that it carries out the mismatch recognition step. This protein has a weak ATPase activity. In Neisseria meningitidis serogroup A / serotype 4A (strain DSM 15465 / Z2491), this protein is DNA mismatch repair protein MutS.